We begin with the raw amino-acid sequence, 293 residues long: Exosome complex component RRP4 (293 aa).

The segment at 1 to 20 (MALEMRLPKARKPLSESLGR) is disordered. The S1 motif domain occupies 79–159 (EVGDIVVGRI…SDGAVSLHTR (81 aa)). At Ser124 the chain carries Phosphoserine.

Belongs to the RRP4 family. Component of the RNA exosome core complex (Exo-9), composed of EXOSC1, EXOSC2, EXOSC3, EXOSC4, EXOSC5, EXOSC6, EXOSC7, EXOSC8 and EXOSC9; within the complex interacts with EXOSC4 and EXOSC7. The catalytically inactive RNA exosome core complex (Exo-9) associates with the catalytic subunit EXOSC10/RRP6. Exo-9 may associate with DIS3 to form the nucleolar exosome complex, or DIS3L to form the cytoplasmic exosome complex. Exo-9 is formed by a hexameric base ring consisting of the heterodimers EXOSC4-EXOSC9, EXOSC5-EXOSC8 and EXOSC6-EXOSC7, and a cap ring consisting of EXOSC1, EXOSC2 and EXOSC3. The RNA exosome complex associates with cofactors C1D/RRP47, MPHOSPH6/MPP6 and MTREX/MTR4. Interacts with GTPBP1. Interacts with ZFP36L1 (via N-terminus).

Its subcellular location is the cytoplasm. It is found in the nucleus. The protein localises to the nucleolus. Its function is as follows. Non-catalytic component of the RNA exosome complex which has 3'-&gt;5' exoribonuclease activity and participates in a multitude of cellular RNA processing and degradation events. In the nucleus, the RNA exosome complex is involved in proper maturation of stable RNA species such as rRNA, snRNA and snoRNA, in the elimination of RNA processing by-products and non-coding 'pervasive' transcripts, such as antisense RNA species and promoter-upstream transcripts (PROMPTs), and of mRNAs with processing defects, thereby limiting or excluding their export to the cytoplasm. The RNA exosome may be involved in Ig class switch recombination (CSR) and/or Ig variable region somatic hypermutation (SHM) by targeting AICDA deamination activity to transcribed dsDNA substrates. In the cytoplasm, the RNA exosome complex is involved in general mRNA turnover and specifically degrades inherently unstable mRNAs containing AU-rich elements (AREs) within their 3' untranslated regions, and in RNA surveillance pathways, preventing translation of aberrant mRNAs. It seems to be involved in degradation of histone mRNA. The catalytic inactive RNA exosome core complex of 9 subunits (Exo-9) is proposed to play a pivotal role in the binding and presentation of RNA for ribonucleolysis, and to serve as a scaffold for the association with catalytic subunits and accessory proteins or complexes. EXOSC2 as peripheral part of the Exo-9 complex stabilizes the hexameric ring of RNase PH-domain subunits through contacts with EXOSC4 and EXOSC7. The chain is Exosome complex component RRP4 (Exosc2) from Mus musculus (Mouse).